The sequence spans 289 residues: Phosphoribulokinase (289 aa).

12–20 (GSSGAGTTT) is a binding site for ATP.

It belongs to the phosphoribulokinase family.

The catalysed reaction is D-ribulose 5-phosphate + ATP = D-ribulose 1,5-bisphosphate + ADP + H(+). The protein operates within carbohydrate biosynthesis; Calvin cycle. This Sinorhizobium medicae (strain WSM419) (Ensifer medicae) protein is Phosphoribulokinase (cbbP).